Consider the following 566-residue polypeptide: Proline--tRNA ligase (566 aa).

The protein belongs to the class-II aminoacyl-tRNA synthetase family. ProS type 1 subfamily. As to quaternary structure, homodimer.

The protein localises to the cytoplasm. The enzyme catalyses tRNA(Pro) + L-proline + ATP = L-prolyl-tRNA(Pro) + AMP + diphosphate. In terms of biological role, catalyzes the attachment of proline to tRNA(Pro) in a two-step reaction: proline is first activated by ATP to form Pro-AMP and then transferred to the acceptor end of tRNA(Pro). As ProRS can inadvertently accommodate and process non-cognate amino acids such as alanine and cysteine, to avoid such errors it has two additional distinct editing activities against alanine. One activity is designated as 'pretransfer' editing and involves the tRNA(Pro)-independent hydrolysis of activated Ala-AMP. The other activity is designated 'posttransfer' editing and involves deacylation of mischarged Ala-tRNA(Pro). The misacylated Cys-tRNA(Pro) is not edited by ProRS. In Bacillus cereus (strain G9842), this protein is Proline--tRNA ligase.